The following is a 630-amino-acid chain: Chaperone protein HtpG (630 aa).

Residues 1–343 (MAKHQFQTEA…SKDLPLNVSR (343 aa)) form an a; substrate-binding region. Residues 344–554 (EILQSNAVMA…KEDPAFMMAQ (211 aa)) are b. The c stretch occupies residues 555 to 630 (IMKQMGQSGD…RLNRVIAKAI (76 aa)).

This sequence belongs to the heat shock protein 90 family. Homodimer.

Its subcellular location is the cytoplasm. Its function is as follows. Molecular chaperone. Has ATPase activity. The chain is Chaperone protein HtpG from Sulfurimonas denitrificans (strain ATCC 33889 / DSM 1251) (Thiomicrospira denitrificans (strain ATCC 33889 / DSM 1251)).